A 709-amino-acid polypeptide reads, in one-letter code: Kelch-like protein 11 (709 aa).

The first 15 residues, 1–15 (MAAAVAAAAAAAAAA), serve as a signal peptide directing secretion. A BTB domain is found at 95–171 (CDITLCFGGA…MYTGRIRVST (77 aa)). The 103-residue stretch at 206–308 (CVAIHSLAHM…KPTYLTRHVK (103 aa)) folds into the BACK domain. Kelch repeat units follow at residues 361 to 408 (VIMV…ITES), 409 to 454 (YVYV…EVKG), 456 to 502 (LYSI…AIED), 504 to 557 (FVYI…VVNS), and 611 to 662 (DVFI…HVRI). Serine 466 carries the phosphoserine modification.

Homodimer. Interacts with CUL3. Component of a cullin-RING-based BCR (BTB-CUL3-RBX1) E3 ubiquitin-protein ligase complex.

Functionally, component of a cullin-RING-based BCR (BTB-CUL3-RBX1) E3 ubiquitin-protein ligase complex that mediates the ubiquitination of target proteins, leading most often to their proteasomal degradation. This Mus musculus (Mouse) protein is Kelch-like protein 11 (Klhl11).